Consider the following 100-residue polypeptide: MAKKSLIYREKKRQKLEQQYHLIRRSSKKEISQIPSLSEKWKIHGKLQSPPRNSAPTRLHRRCFSTGRPRANYRDFGLSGHILREMVHAGLLPGATRSSW.

This sequence belongs to the universal ribosomal protein uS14 family. In terms of assembly, part of the 30S ribosomal subunit.

The protein localises to the plastid. It localises to the chloroplast. In terms of biological role, binds 16S rRNA, required for the assembly of 30S particles. This chain is Small ribosomal subunit protein uS14c, found in Lobularia maritima (Sweet alyssum).